A 321-amino-acid chain; its full sequence is Merozoite surface protein 9 (321 aa).

Basic and acidic residues predominate over residues 58–74 (KEDNQAVDTKSMEEPKV). Disordered regions lie at residues 58-88 (KEDN…PTED), 113-141 (NNTP…ENFD), and 263-321 (IEAE…EEKK). Positions 113–122 (NNTPNVVPPT) are enriched in low complexity. The span at 273–321 (KNKEEEEKEKEKEKEKEEKEKEEKEKEKEEKEKEEKEKEEKEEKEEEKK) shows a compositional bias: basic and acidic residues.

Belongs to the plasmodium ABRA family. As to quaternary structure, forms a complex composed of MSP1, MSP6, MSP7, MSP9 and MSP3; within the complex, MSP6 and MSP9 mediate the binding to the host erythrocyte. Interacts with MSP1 subunits p19 and p42; the interaction is direct. Interacts with host SLC4A1/Band 3 protein (via the 5ABC region). MSP1 subunits p19 or p42, and MSP9 form a co-ligand complex that interacts with host SLC4A1/Band 3 protein. Not glycosylated.

Its subcellular location is the cell membrane. It is found in the parasitophorous vacuole lumen. The protein resides in the secreted. In terms of biological role, during the asexual blood stage, involved in the sialic acid-independent (SAID) merozoite invasion of host erythrocytes by binding to host SLC4A1/Band 3 protein on the surface of the host erythrocyte. This Plasmodium falciparum (isolate FC27 / Papua New Guinea) protein is Merozoite surface protein 9.